Reading from the N-terminus, the 154-residue chain is Lipoprotein signal peptidase (154 aa).

Helical transmembrane passes span 57–77 (LVLS…MIKY) and 86–103 (ISLS…YDRV). Active-site residues include Asp-110 and Asp-129. The helical transmembrane segment at 124–144 (VFNVADICVVVGTIMIAIFIV) threads the bilayer.

It belongs to the peptidase A8 family.

The protein resides in the cell membrane. The catalysed reaction is Release of signal peptides from bacterial membrane prolipoproteins. Hydrolyzes -Xaa-Yaa-Zaa-|-(S,diacylglyceryl)Cys-, in which Xaa is hydrophobic (preferably Leu), and Yaa (Ala or Ser) and Zaa (Gly or Ala) have small, neutral side chains.. It participates in protein modification; lipoprotein biosynthesis (signal peptide cleavage). In terms of biological role, this protein specifically catalyzes the removal of signal peptides from prolipoproteins. The polypeptide is Lipoprotein signal peptidase (Clostridium acetobutylicum (strain ATCC 824 / DSM 792 / JCM 1419 / IAM 19013 / LMG 5710 / NBRC 13948 / NRRL B-527 / VKM B-1787 / 2291 / W)).